A 226-amino-acid chain; its full sequence is Endonuclease NucS (226 aa).

The protein belongs to the NucS endonuclease family.

The protein localises to the cytoplasm. Functionally, cleaves both 3' and 5' ssDNA extremities of branched DNA structures. This is Endonuclease NucS from Mycobacterium ulcerans (strain Agy99).